A 718-amino-acid chain; its full sequence is DNA ligase (718 aa).

NAD(+)-binding positions include D44–D48, S93–L94, and E127. The active-site N6-AMP-lysine intermediate is K129. NAD(+)-binding residues include R150, E186, K302, and K326. The Zn(2+) site is built by C432, C435, C456, and C462. The 79-residue stretch at T640 to G718 folds into the BRCT domain.

Belongs to the NAD-dependent DNA ligase family. LigA subfamily. Requires Mg(2+) as cofactor. Mn(2+) serves as cofactor.

The enzyme catalyses NAD(+) + (deoxyribonucleotide)n-3'-hydroxyl + 5'-phospho-(deoxyribonucleotide)m = (deoxyribonucleotide)n+m + AMP + beta-nicotinamide D-nucleotide.. Functionally, DNA ligase that catalyzes the formation of phosphodiester linkages between 5'-phosphoryl and 3'-hydroxyl groups in double-stranded DNA using NAD as a coenzyme and as the energy source for the reaction. It is essential for DNA replication and repair of damaged DNA. The protein is DNA ligase of Rhizobium johnstonii (strain DSM 114642 / LMG 32736 / 3841) (Rhizobium leguminosarum bv. viciae).